We begin with the raw amino-acid sequence, 121 residues long: uncharacterized protein (121 aa).

The first 23 residues, 1–23, serve as a signal peptide directing secretion; the sequence is MNFSTVFQAIIAVLGLTTVTALA. N-linked (GlcNAc...) asparagine glycans are attached at residues Asn68 and Asn84.

Post-translationally, N-glycosylated.

This is an uncharacterized protein from Saccharomyces cerevisiae (strain ATCC 204508 / S288c) (Baker's yeast).